The chain runs to 121 residues: Large ribosomal subunit protein uL18c (121 aa).

It belongs to the universal ribosomal protein uL18 family. In terms of assembly, part of the 50S ribosomal subunit; contacts the 5S rRNA.

The protein resides in the plastid. It localises to the cyanelle. Binds 5S rRNA, forms part of the central protuberance of the 50S subunit. This chain is Large ribosomal subunit protein uL18c (rpl18), found in Cyanophora paradoxa.